We begin with the raw amino-acid sequence, 236 residues long: Uridylate kinase (236 aa).

Position 10–11 (10–11 (GS)) interacts with ATP. Gly44 serves as a coordination point for UMP. Residues Gly45 and Arg49 each coordinate ATP. UMP is bound by residues Asp66 and 114 to 120 (ITPGQTT). Residues Thr140, Tyr146, and Asp149 each coordinate ATP.

Belongs to the UMP kinase family. In terms of assembly, homohexamer.

The protein localises to the cytoplasm. The catalysed reaction is UMP + ATP = UDP + ADP. It participates in pyrimidine metabolism; CTP biosynthesis via de novo pathway; UDP from UMP (UMPK route): step 1/1. Its activity is regulated as follows. Inhibited by UTP. Its function is as follows. Catalyzes the reversible phosphorylation of UMP to UDP. The chain is Uridylate kinase from Methanospirillum hungatei JF-1 (strain ATCC 27890 / DSM 864 / NBRC 100397 / JF-1).